Reading from the N-terminus, the 458-residue chain is ATP synthase subunit beta (458 aa).

148-155 is an ATP binding site; sequence GGAGVGKT.

Belongs to the ATPase alpha/beta chains family. As to quaternary structure, F-type ATPases have 2 components, CF(1) - the catalytic core - and CF(0) - the membrane proton channel. CF(1) has five subunits: alpha(3), beta(3), gamma(1), delta(1), epsilon(1). CF(0) has three main subunits: a(1), b(2) and c(9-12). The alpha and beta chains form an alternating ring which encloses part of the gamma chain. CF(1) is attached to CF(0) by a central stalk formed by the gamma and epsilon chains, while a peripheral stalk is formed by the delta and b chains.

It is found in the cell inner membrane. The enzyme catalyses ATP + H2O + 4 H(+)(in) = ADP + phosphate + 5 H(+)(out). Its function is as follows. Produces ATP from ADP in the presence of a proton gradient across the membrane. The catalytic sites are hosted primarily by the beta subunits. The protein is ATP synthase subunit beta of Pseudomonas putida (strain ATCC 700007 / DSM 6899 / JCM 31910 / BCRC 17059 / LMG 24140 / F1).